Here is a 246-residue protein sequence, read N- to C-terminus: Major prion protein (246 aa).

The signal sequence occupies residues 1–15 (MLVVFVATWSDLGLC). The interaction with GRB2, ERI3 and SYN1 stretch occupies residues 16-223 (KKRPKPGGWN…ESQAYYQRGS (208 aa)). The disordered stretch occupies residues 18 to 100 (RPKPGGWNTG…QWHKPSKPKT (83 aa)). Repeat copies occupy residues 44-52 (PQGGGGWGQ), 53-60 (PHGGGWGQ), 61-68 (PHGGGWGQ), 69-76 (PHGGGWGQ), and 77-84 (PHGGGWGQ). A 5 X 8 AA tandem repeats of P-H-G-G-G-W-G-Q region spans residues 44–84 (PQGGGGWGQPHGGGWGQPHGGGWGQPHGGGWGQPHGGGWGQ). Residues 45–88 (QGGGGWGQPHGGGWGQPHGGGWGQPHGGGWGQPHGGGWGQGGGT) are compositionally biased toward gly residues. 12 residues coordinate Cu(2+): histidine 54, glycine 55, glycine 56, histidine 62, glycine 63, glycine 64, histidine 70, glycine 71, glycine 72, histidine 78, glycine 79, and glycine 80. Over residues 91–100 (QWHKPSKPKT) the composition is skewed to basic residues. Cysteine 172 and cysteine 207 are oxidised to a cystine. Asparagine 174 and asparagine 190 each carry an N-linked (GlcNAc...) asparagine glycan. Serine 223 carries GPI-anchor amidated serine lipidation. Residues 224–246 (SMVLFSSPPVILLISFLIFLIVG) constitute a propeptide, removed in mature form.

This sequence belongs to the prion family. As to quaternary structure, monomer and homodimer. Has a tendency to aggregate into amyloid fibrils containing a cross-beta spine, formed by a steric zipper of superposed beta-strands. Soluble oligomers may represent an intermediate stage on the path to fibril formation. Copper binding may promote oligomerization. Interacts with GRB2, APP, ERI3/PRNPIP and SYN1. Mislocalized cytosolically exposed PrP interacts with MGRN1; this interaction alters MGRN1 subcellular location and causes lysosomal enlargement. Interacts with KIAA1191.

It is found in the cell membrane. It localises to the golgi apparatus. Its primary physiological function is unclear. Has cytoprotective activity against internal or environmental stresses. May play a role in neuronal development and synaptic plasticity. May be required for neuronal myelin sheath maintenance. May play a role in iron uptake and iron homeostasis. Soluble oligomers are toxic to cultured neuroblastoma cells and induce apoptosis (in vitro). Association with GPC1 (via its heparan sulfate chains) targets PRNP to lipid rafts. Also provides Cu(2+) or Zn(2+) for the ascorbate-mediated GPC1 deaminase degradation of its heparan sulfate side chains. The polypeptide is Major prion protein (PRNP) (Erythrocebus patas (Red guenon)).